Reading from the N-terminus, the 291-residue chain is Proteasomal ubiquitin receptor ADRM1 homolog rpn1301 (291 aa).

The Pru domain maps to 1–114 (MSLITFKAGK…ERINSYIKDQ (114 aa)). A disordered region spans residues 135 to 162 (TVEQSEPIAQPTESSKESSEIGAPNSDE). The DEUBAD domain maps to 178–290 (AQAGFGGSTV…ARFVSRNNGS (113 aa)).

It belongs to the ADRM1 family. As to quaternary structure, component of the 19S proteasome regulatory particle complex. The 2 S.pombe rpn13 homologs, rpn1301 and rpn1302 are present at a 0.2-1 ratio.

Its subcellular location is the cytoplasm. It localises to the nucleus. Functionally, component of the 26S proteasome, a multiprotein complex involved in the ATP-dependent degradation of ubiquitinated proteins. This complex plays a key role in the maintenance of protein homeostasis by removing misfolded or damaged proteins, which could impair cellular functions, and by removing proteins whose functions are no longer required. Therefore, the proteasome participates in numerous cellular processes, including cell cycle progression, apoptosis, or DNA damage repair. Within the complex, functions as a proteasomal ubiquitin receptor. The sequence is that of Proteasomal ubiquitin receptor ADRM1 homolog rpn1301 (rpn1301) from Schizosaccharomyces pombe (strain 972 / ATCC 24843) (Fission yeast).